Here is a 252-residue protein sequence, read N- to C-terminus: Imidazole glycerol phosphate synthase subunit HisF (252 aa).

Active-site residues include aspartate 11 and aspartate 130.

The protein belongs to the HisA/HisF family. In terms of assembly, heterodimer of HisH and HisF.

It is found in the cytoplasm. The enzyme catalyses 5-[(5-phospho-1-deoxy-D-ribulos-1-ylimino)methylamino]-1-(5-phospho-beta-D-ribosyl)imidazole-4-carboxamide + L-glutamine = D-erythro-1-(imidazol-4-yl)glycerol 3-phosphate + 5-amino-1-(5-phospho-beta-D-ribosyl)imidazole-4-carboxamide + L-glutamate + H(+). It functions in the pathway amino-acid biosynthesis; L-histidine biosynthesis; L-histidine from 5-phospho-alpha-D-ribose 1-diphosphate: step 5/9. Functionally, IGPS catalyzes the conversion of PRFAR and glutamine to IGP, AICAR and glutamate. The HisF subunit catalyzes the cyclization activity that produces IGP and AICAR from PRFAR using the ammonia provided by the HisH subunit. This chain is Imidazole glycerol phosphate synthase subunit HisF, found in Aromatoleum aromaticum (strain DSM 19018 / LMG 30748 / EbN1) (Azoarcus sp. (strain EbN1)).